The primary structure comprises 510 residues: Probable cytochrome P450 517A2 (510 aa).

The chain crosses the membrane as a helical span at residues 1 to 21 (MRILIIIILIIIVFLVKDTIK). Position 450 (Cys-450) interacts with heme.

It belongs to the cytochrome P450 family. It depends on heme as a cofactor.

It is found in the membrane. This chain is Probable cytochrome P450 517A2 (cyp517A2), found in Dictyostelium discoideum (Social amoeba).